The sequence spans 312 residues: Methionyl-tRNA formyltransferase (312 aa).

111–114 (SLLP) contacts (6S)-5,6,7,8-tetrahydrofolate.

It belongs to the Fmt family.

It carries out the reaction L-methionyl-tRNA(fMet) + (6R)-10-formyltetrahydrofolate = N-formyl-L-methionyl-tRNA(fMet) + (6S)-5,6,7,8-tetrahydrofolate + H(+). Functionally, attaches a formyl group to the free amino group of methionyl-tRNA(fMet). The formyl group appears to play a dual role in the initiator identity of N-formylmethionyl-tRNA by promoting its recognition by IF2 and preventing the misappropriation of this tRNA by the elongation apparatus. This Myxococcus xanthus (strain DK1622) protein is Methionyl-tRNA formyltransferase.